The chain runs to 309 residues: Serine/threonine-protein phosphatase PP2A catalytic subunit (309 aa).

Mn(2+) contacts are provided by Asp57, His59, Asp85, and Asn117. His118 (proton donor) is an active-site residue. Positions 167 and 241 each coordinate Mn(2+).

The protein belongs to the PPP phosphatase family. PP-2A subfamily. Mn(2+) is required as a cofactor.

The catalysed reaction is O-phospho-L-seryl-[protein] + H2O = L-seryl-[protein] + phosphate. The enzyme catalyses O-phospho-L-threonyl-[protein] + H2O = L-threonyl-[protein] + phosphate. This is Serine/threonine-protein phosphatase PP2A catalytic subunit from Brassica napus (Rape).